Reading from the N-terminus, the 431-residue chain is Probable prephenate dehydrogenase [NADP(+)] (431 aa).

5–34 is a binding site for NADP(+); sequence FQVGIIGFGDMGRLYAEYISKAGWRVNVCD. Positions 5–285 constitute a Prephenate/arogenate dehydrogenase domain; it reads FQVGIIGFGD…GENMDRNSSG (281 aa).

It belongs to the prephenate/arogenate dehydrogenase family.

It localises to the cytoplasm. It carries out the reaction prephenate + NADP(+) = 3-(4-hydroxyphenyl)pyruvate + CO2 + NADPH. It participates in amino-acid biosynthesis; L-tyrosine biosynthesis; (4-hydroxyphenyl)pyruvate from prephenate (NADP(+) route): step 1/1. In Schizosaccharomyces pombe (strain 972 / ATCC 24843) (Fission yeast), this protein is Probable prephenate dehydrogenase [NADP(+)] (tyr1).